We begin with the raw amino-acid sequence, 121 residues long: MSITKDQIIEGVAALSVMEIVELIAAMEEKFGVSAAAVAAGPAAAAEAVEEKTEFDVVLKGIGANKVAVIKAVRGATGLGLKEAKDLVESAPAALKEGISKDDAEALKKALEEAGAEVEVK.

The protein belongs to the bacterial ribosomal protein bL12 family. Homodimer. Part of the ribosomal stalk of the 50S ribosomal subunit. Forms a multimeric L10(L12)X complex, where L10 forms an elongated spine to which 2 to 4 L12 dimers bind in a sequential fashion. Binds GTP-bound translation factors.

Functionally, forms part of the ribosomal stalk which helps the ribosome interact with GTP-bound translation factors. Is thus essential for accurate translation. The chain is Large ribosomal subunit protein bL12 from Serratia proteamaculans (strain 568).